Here is an 829-residue protein sequence, read N- to C-terminus: MGKKGKVGKSRRDKFYHLAKETGYRSRSAFKLIQLNRRFQFLQKARALLDLCAAPGGWLQVAAKFMPVSSLIVGVDLVPIKPLPNVVTLQEDITTERCRQALRKELKTWKVDVVLNDGAPNVGASWVHDAYSQAHLTLMALRLACDFLARGGCFITKVFRSRDYQPLLWIFQQLFHRVQATKPQASRHESAEIFVVCQGFLAPDKVDAKFFDPKFAFKEVEVQAKTVTELVTKKKPKAEGYAEGDLTLYHRTSVTDFLRAANPVDFLSKASEISIDDKELAQHPATTEDIRACCQDIKVLGRKELRSLLNWRTKLRRYVAKKLKEQAKALDISLSSEEEGDEEESAAETKQASEEEEEREEEEQLNRTLAEMKAQEVAELKRKKKKLLREQRKQRERVELKMDLPGVSIADEGETGMFSLRTIRGQQLLEEVTQGDMNAADTFLSDLPRDDIYVSDAEDDDDTSLESDLDPEELAGVRTHSDQKEQKSLQFAQVDDSKEEEGENPLLVPLEEKAVLQEEQASLWFSKDGFSGIDDDADEALEISQAQLLYKSRQKEQQPTDPPPPPTNLKTEKKSSQCQNEVPKETEAITDTGGEDRDSSDSDSSSSEDEDDWKVSRGKKRSRGSKADEDGFEVVPIEDPVKYRILDPEGLALGAVIASSKKAKRDLIDNSFNRYAFNEEEEELPEWFVQEEKQHRIRQLPLDKKEVEHYRKRWREINARPIKKVAEAKARKKRRMLKKLEQTKKKAEAVVNTVDISEREKVAQLRSLYKKAGLGKEKRQVTYVVAKKGVGRKVRRPAGVRGHFKVVDSRMKKDQRAQRKEQKRNHRRK.

S-adenosyl-L-methionine contacts are provided by Gly56, Trp58, Asp76, Asp92, and Asp117. Lys157 acts as the Proton acceptor in catalysis. The tract at residues 332 to 367 (ISLSSEEEGDEEESAAETKQASEEEEEREEEEQLNR) is disordered. Phosphoserine occurs at positions 333, 335, 336, 345, and 353. A compositionally biased stretch (acidic residues) spans 336 to 346 (SEEEGDEEESA). Residues 354–363 (EEEEEREEEE) are compositionally biased toward acidic residues. Residue Arg389 is modified to Citrulline. Disordered stretches follow at residues 443–508 (FLSD…PLLV) and 528–634 (DGFS…GFEV). The span at 456–473 (DAEDDDDTSLESDLDPEE) shows a compositional bias: acidic residues. Ser531 and Ser544 each carry phosphoserine. A Glycyl lysine isopeptide (Lys-Gly) (interchain with G-Cter in SUMO2) cross-link involves residue Lys570. Ser575 carries the phosphoserine modification. Residues Lys626 and Lys642 each participate in a glycyl lysine isopeptide (Lys-Gly) (interchain with G-Cter in SUMO2) cross-link. A Phosphoserine modification is found at Ser659. A Glycyl lysine isopeptide (Lys-Gly) (interchain with G-Cter in SUMO2) cross-link involves residue Lys661. Ser671 is modified (phosphoserine). Lys693 is covalently cross-linked (Glycyl lysine isopeptide (Lys-Gly) (interchain with G-Cter in SUMO2)). The stretch at 722–760 (IKKVAEAKARKKRRMLKKLEQTKKKAEAVVNTVDISERE) forms a coiled coil. Arg766 carries the post-translational modification Citrulline. Positions 794–804 (VRRPAGVRGHF) are enriched in basic residues. The disordered stretch occupies residues 794 to 829 (VRRPAGVRGHFKVVDSRMKKDQRAQRKEQKRNHRRK). The segment covering 805-820 (KVVDSRMKKDQRAQRK) has biased composition (basic and acidic residues).

It belongs to the class I-like SAM-binding methyltransferase superfamily. RNA methyltransferase RlmE family. SPB1 subfamily. In terms of assembly, interacts with NIP7. In terms of processing, citrullinated by PADI4.

It localises to the nucleus. The protein resides in the nucleolus. The catalysed reaction is a ribonucleotide in rRNA + S-adenosyl-L-methionine = a 2'-O-methylribonucleotide in rRNA + S-adenosyl-L-homocysteine + H(+). In terms of biological role, RNA 2'-O-methyltransferase involved in the processing of the 34S pre-rRNA to 18S rRNA and in 40S ribosomal subunit formation. This Rattus norvegicus (Rat) protein is pre-rRNA 2'-O-ribose RNA methyltransferase FTSJ3 (Ftsj3).